Reading from the N-terminus, the 127-residue chain is Small ribosomal subunit protein uS13 (127 aa).

Belongs to the universal ribosomal protein uS13 family. In terms of assembly, part of the 30S ribosomal subunit. Forms a loose heterodimer with protein S19. Forms two bridges to the 50S subunit in the 70S ribosome.

In terms of biological role, located at the top of the head of the 30S subunit, it contacts several helices of the 16S rRNA. In the 70S ribosome it contacts the 23S rRNA (bridge B1a) and protein L5 of the 50S subunit (bridge B1b), connecting the 2 subunits; these bridges are implicated in subunit movement. Contacts the tRNAs in the A and P-sites. The polypeptide is Small ribosomal subunit protein uS13 (Pelagibacter ubique (strain HTCC1062)).